A 140-amino-acid chain; its full sequence is MQRQTGHMEDKKRTGLESQGTENAFSDGRDGKDGLLHEGINEPILIPSTIADLEGIRELVRKFRGRLLPFEKCPDFCLRIGGLEASFHKGQEELLEYCEALYLPQPVKMEIVGIVDDVPCLATGMQLLILVAEGGRGICL.

Residues 1–15 (MQRQTGHMEDKKRTG) show a composition bias toward basic and acidic residues. Residues 1-34 (MQRQTGHMEDKKRTGLESQGTENAFSDGRDGKDG) form a disordered region.

This is an uncharacterized protein from Gallus gallus (Chicken).